The sequence spans 119 residues: MDTLCSTLLLLTIPSWVLSQITLKESGPTLVKPTQTLTLTCTFSGFSLSTSGVGVGWIRQPPGKALEWLALIYWDDDKRYSPSLKSRLTITKDTSKNQVVLTMTNMDPVDTATYYCAHR.

An N-terminal signal peptide occupies residues Met-1–Ser-19. At Gln-20 the chain carries Pyrrolidone carboxylic acid. A framework-1 region spans residues Gln-20–Ser-44. An Ig-like domain is found at Gln-20–Arg-119. An intrachain disulfide couples Cys-41 to Cys-116. Positions Gly-45–Gly-54 are complementarity-determining-1. The tract at residues Val-55–Leu-71 is framework-2. The interval Ile-72–Lys-78 is complementarity-determining-2. Residues Arg-79–Cys-116 form a framework-3 region. A complementarity-determining-3 region spans residues Ala-117–Arg-119.

Immunoglobulins are composed of two identical heavy chains and two identical light chains; disulfide-linked.

It is found in the secreted. It localises to the cell membrane. In terms of biological role, v region of the variable domain of immunoglobulin heavy chains that participates in the antigen recognition. Immunoglobulins, also known as antibodies, are membrane-bound or secreted glycoproteins produced by B lymphocytes. In the recognition phase of humoral immunity, the membrane-bound immunoglobulins serve as receptors which, upon binding of a specific antigen, trigger the clonal expansion and differentiation of B lymphocytes into immunoglobulins-secreting plasma cells. Secreted immunoglobulins mediate the effector phase of humoral immunity, which results in the elimination of bound antigens. The antigen binding site is formed by the variable domain of one heavy chain, together with that of its associated light chain. Thus, each immunoglobulin has two antigen binding sites with remarkable affinity for a particular antigen. The variable domains are assembled by a process called V-(D)-J rearrangement and can then be subjected to somatic hypermutations which, after exposure to antigen and selection, allow affinity maturation for a particular antigen. The chain is Immunoglobulin heavy variable 2-5 from Homo sapiens (Human).